Consider the following 385-residue polypeptide: Succinyl-diaminopimelate desuccinylase (385 aa).

Residue His73 participates in Zn(2+) binding. Asp75 is an active-site residue. Asp106 lines the Zn(2+) pocket. The active-site Proton acceptor is Glu141. Zn(2+) contacts are provided by Glu142, Glu170, and His359.

It belongs to the peptidase M20A family. DapE subfamily. Homodimer. Requires Zn(2+) as cofactor. The cofactor is Co(2+).

It catalyses the reaction N-succinyl-(2S,6S)-2,6-diaminopimelate + H2O = (2S,6S)-2,6-diaminopimelate + succinate. It participates in amino-acid biosynthesis; L-lysine biosynthesis via DAP pathway; LL-2,6-diaminopimelate from (S)-tetrahydrodipicolinate (succinylase route): step 3/3. Catalyzes the hydrolysis of N-succinyl-L,L-diaminopimelic acid (SDAP), forming succinate and LL-2,6-diaminopimelate (DAP), an intermediate involved in the bacterial biosynthesis of lysine and meso-diaminopimelic acid, an essential component of bacterial cell walls. This Methylorubrum extorquens (strain PA1) (Methylobacterium extorquens) protein is Succinyl-diaminopimelate desuccinylase.